The following is a 115-amino-acid chain: ATP synthase subunits region ORF 7 (115 aa).

This chain is ATP synthase subunits region ORF 7, found in Fuscovulum blasticum (Rhodobacter blasticus).